The following is a 33-amino-acid chain: Brevinin-2DYc (33 aa).

The cysteines at positions 27 and 33 are disulfide-linked.

Expressed by the skin glands.

Its subcellular location is the secreted. Functionally, antimicrobial peptide. A mixture of Brevinin-2DYc/2DYd is active against the Gram-positive bacterium S.aureus (MIC=15 uM) and the Gram-negative bacterium E.coli (MIC=15 uM). This is Brevinin-2DYc from Rana dybowskii (Dybovsky's frog).